Consider the following 310-residue polypeptide: Homoserine O-acetyltransferase (310 aa).

Residue C142 is the Acyl-thioester intermediate of the active site. Residues K163 and S192 each contribute to the substrate site. H235 acts as the Proton acceptor in catalysis. E237 is an active-site residue. A substrate-binding site is contributed by R249.

This sequence belongs to the MetA family.

The protein localises to the cytoplasm. It carries out the reaction L-homoserine + acetyl-CoA = O-acetyl-L-homoserine + CoA. It functions in the pathway amino-acid biosynthesis; L-methionine biosynthesis via de novo pathway; O-acetyl-L-homoserine from L-homoserine: step 1/1. Transfers an acetyl group from acetyl-CoA to L-homoserine, forming acetyl-L-homoserine. This chain is Homoserine O-acetyltransferase, found in Agathobacter rectalis (strain ATCC 33656 / DSM 3377 / JCM 17463 / KCTC 5835 / VPI 0990) (Eubacterium rectale).